The sequence spans 269 residues: tRNA uridine(34) hydroxylase (269 aa).

Positions 122–216 (QDPEVVLIDV…YLEAIAPEEN (95 aa)) constitute a Rhodanese domain. Cys-176 acts as the Cysteine persulfide intermediate in catalysis.

This sequence belongs to the TrhO family.

It carries out the reaction uridine(34) in tRNA + AH2 + O2 = 5-hydroxyuridine(34) in tRNA + A + H2O. Functionally, catalyzes oxygen-dependent 5-hydroxyuridine (ho5U) modification at position 34 in tRNAs. In Synechococcus elongatus (strain ATCC 33912 / PCC 7942 / FACHB-805) (Anacystis nidulans R2), this protein is tRNA uridine(34) hydroxylase.